The primary structure comprises 560 residues: N-acetylglucosamine-6-sulfatase (560 aa).

The tract at residues 1–25 (MRLLSLAPDRPRRGGPRHLTSGSPA) is disordered. A signal peptide spans 1 to 48 (MRLLSLAPDRPRRGGPRHLTSGSPALPPPPPLLLLLLLLGGCLGVSGA). 3 residues coordinate Ca(2+): D63, D64, and C99. Catalysis depends on C99, which acts as the Nucleophile. A 3-oxoalanine (Cys) modification is found at C99. 7 N-linked (GlcNAc...) asparagine glycosylation sites follow: N119, N125, N191, N206, N218, N287, and N325. Ca(2+) contacts are provided by D334 and N335. Residues N370, N395, N413, N430, N457, and N488 are each glycosylated (N-linked (GlcNAc...) asparagine). S549 is subject to Phosphoserine.

It belongs to the sulfatase family. The cofactor is Ca(2+). Post-translationally, the conversion to 3-oxoalanine (also known as C-formylglycine, FGly), of a serine or cysteine residue in prokaryotes and of a cysteine residue in eukaryotes, is critical for catalytic activity.

It localises to the lysosome. The catalysed reaction is Hydrolysis of the 6-sulfate groups of the N-acetyl-D-glucosamine 6-sulfate units of heparan sulfate and keratan sulfate.. Its function is as follows. Hydrolyzes 6-sulfate groups in N-acetyl-d-glucosaminide units of heparin sulfate and keratan sulfate. The protein is N-acetylglucosamine-6-sulfatase (GNS) of Bos taurus (Bovine).